We begin with the raw amino-acid sequence, 126 residues long: Small ribosomal subunit protein uS12 (126 aa).

Residues 1-29 (MPTIQQLIRQPRAPKKRRSKSPALQKCPQ) form a disordered region. Aspartate 89 bears the 3-methylthioaspartic acid mark.

It belongs to the universal ribosomal protein uS12 family. As to quaternary structure, part of the 30S ribosomal subunit. Contacts proteins S8 and S17. May interact with IF1 in the 30S initiation complex.

With S4 and S5 plays an important role in translational accuracy. Functionally, interacts with and stabilizes bases of the 16S rRNA that are involved in tRNA selection in the A site and with the mRNA backbone. Located at the interface of the 30S and 50S subunits, it traverses the body of the 30S subunit contacting proteins on the other side and probably holding the rRNA structure together. The combined cluster of proteins S8, S12 and S17 appears to hold together the shoulder and platform of the 30S subunit. The protein is Small ribosomal subunit protein uS12 of Protochlamydia amoebophila (strain UWE25).